The primary structure comprises 611 residues: uncharacterized protein (611 aa).

One can recognise an SAC domain in the interval 51–351 (LYGFIRLKIY…DYHKQGSRNL (301 aa)).

This sequence to yeast RSD1 and S.pombe SpBC19F5.03.

This is an uncharacterized protein from Schizosaccharomyces pombe (strain 972 / ATCC 24843) (Fission yeast).